We begin with the raw amino-acid sequence, 919 residues long: Kinesin-like protein KIN-UA (919 aa).

A disordered region spans residues methionine 1–proline 68. The span at glycine 15–alanine 51 shows a compositional bias: low complexity. Residues leucine 52–glycine 66 show a composition bias toward gly residues. A Kinesin motor domain is found at arginine 70–valine 412. Glycine 155–threonine 162 is an ATP binding site. The disordered stretch occupies residues threonine 286 to lysine 305. The span at serine 291–threonine 301 shows a compositional bias: polar residues. The D-BOX signature appears at arginine 382–glycine 390. Coiled-coil stretches lie at residues serine 428–lysine 492 and alanine 530–histidine 621. 4 ARM repeats span residues lysine 650–alanine 689, glutamate 691–methionine 731, glutamate 733–glycine 773, and aspartate 775–lysine 814.

Belongs to the TRAFAC class myosin-kinesin ATPase superfamily. Kinesin family. Ungrouped subfamily. In terms of assembly, interacts (via C-terminus) with NEK5. Expressed in leaves, guard cells, trichomes, vascular tissues, stele of the root tip region and columella cells. Highest expression detected in guard cells.

The protein resides in the cytoplasm. It localises to the cytoskeleton. The protein is Kinesin-like protein KIN-UA of Arabidopsis thaliana (Mouse-ear cress).